The following is a 115-amino-acid chain: Large ribosomal subunit protein bL19 (115 aa).

This sequence belongs to the bacterial ribosomal protein bL19 family.

Functionally, this protein is located at the 30S-50S ribosomal subunit interface and may play a role in the structure and function of the aminoacyl-tRNA binding site. This Buchnera aphidicola subsp. Acyrthosiphon pisum (strain APS) (Acyrthosiphon pisum symbiotic bacterium) protein is Large ribosomal subunit protein bL19 (rplS).